The chain runs to 506 residues: Ribose import ATP-binding protein RbsA (506 aa).

2 ABC transporter domains span residues 5–241 (LALT…VGRR) and 254–498 (RDAA…TSDV). Residue 37-44 (GENGAGKS) coordinates ATP.

The protein belongs to the ABC transporter superfamily. Ribose importer (TC 3.A.1.2.1) family. In terms of assembly, the complex is composed of an ATP-binding protein (RbsA), two transmembrane proteins (RbsC) and a solute-binding protein (RbsB).

It localises to the cell inner membrane. It catalyses the reaction D-ribose(out) + ATP + H2O = D-ribose(in) + ADP + phosphate + H(+). In terms of biological role, part of the ABC transporter complex RbsABC involved in ribose import. Responsible for energy coupling to the transport system. This chain is Ribose import ATP-binding protein RbsA, found in Burkholderia mallei (strain ATCC 23344).